The chain runs to 342 residues: N-acetyl-gamma-glutamyl-phosphate reductase (342 aa).

C147 is an active-site residue.

The protein belongs to the NAGSA dehydrogenase family. Type 1 subfamily.

The protein localises to the cytoplasm. It catalyses the reaction N-acetyl-L-glutamate 5-semialdehyde + phosphate + NADP(+) = N-acetyl-L-glutamyl 5-phosphate + NADPH + H(+). Its pathway is amino-acid biosynthesis; L-arginine biosynthesis; N(2)-acetyl-L-ornithine from L-glutamate: step 3/4. In terms of biological role, catalyzes the NADPH-dependent reduction of N-acetyl-5-glutamyl phosphate to yield N-acetyl-L-glutamate 5-semialdehyde. This is N-acetyl-gamma-glutamyl-phosphate reductase from Methanosphaera stadtmanae (strain ATCC 43021 / DSM 3091 / JCM 11832 / MCB-3).